The following is a 248-amino-acid chain: mRNA-decapping protein OPG122 (248 aa).

In terms of domain architecture, Nudix hydrolase spans His45–Lys227. Positions Gly125–Asn147 match the Nudix box motif. Glu132 serves as a coordination point for Mg(2+). The active-site Nucleophile is the Glu141. A Mn(2+)-binding site is contributed by Glu145. Mg(2+) is bound at residue Asp167.

It belongs to the Nudix hydrolase family. It depends on Mg(2+) as a cofactor. Requires Mn(2+) as cofactor.

It localises to the host mitochondrion. In terms of biological role, decapping enzyme that remove the protective 5'-cap from both host and viral mRNAs to commit transcripts for decay by the cellular exonuclease XRN1. Preferentially targets spliced mRNAs and since all viral genes are intronless, it preferentially targets host over viral transcripts. Acceleration of the turnover of cellular transcripts promotes the shutoff of host protein synthesis and therefore diminish the magnitude of antiviral response. The polypeptide is mRNA-decapping protein OPG122 (OPG122) (Variola virus (isolate Human/India/Ind3/1967) (VARV)).